The following is a 186-amino-acid chain: Elongation factor P (186 aa).

It belongs to the elongation factor P family.

It is found in the cytoplasm. It functions in the pathway protein biosynthesis; polypeptide chain elongation. In terms of biological role, involved in peptide bond synthesis. Stimulates efficient translation and peptide-bond synthesis on native or reconstituted 70S ribosomes in vitro. Probably functions indirectly by altering the affinity of the ribosome for aminoacyl-tRNA, thus increasing their reactivity as acceptors for peptidyl transferase. The chain is Elongation factor P from Shewanella denitrificans (strain OS217 / ATCC BAA-1090 / DSM 15013).